A 204-amino-acid chain; its full sequence is Ribosomal RNA small subunit methyltransferase G (204 aa).

S-adenosyl-L-methionine contacts are provided by residues glycine 74, leucine 79, 125-126, and arginine 138; that span reads AY.

Belongs to the methyltransferase superfamily. RNA methyltransferase RsmG family.

It is found in the cytoplasm. Its function is as follows. Specifically methylates the N7 position of a guanine in 16S rRNA. In Brachyspira hyodysenteriae (strain ATCC 49526 / WA1), this protein is Ribosomal RNA small subunit methyltransferase G.